We begin with the raw amino-acid sequence, 185 residues long: Ribosome-recycling factor (185 aa).

The protein belongs to the RRF family.

It localises to the cytoplasm. Functionally, responsible for the release of ribosomes from messenger RNA at the termination of protein biosynthesis. May increase the efficiency of translation by recycling ribosomes from one round of translation to another. The sequence is that of Ribosome-recycling factor from Brevibacillus brevis (strain 47 / JCM 6285 / NBRC 100599).